The chain runs to 1033 residues: E3 ubiquitin-protein ligase Topors (1033 aa).

Positions 1–10 (MGSQPPPPGS) are enriched in pro residues. The disordered stretch occupies residues 1–36 (MGSQPPPPGSPLSREEGEAPPLVPAEEGRRRSRRVR). A required for DNA-binding region spans residues 52 to 376 (ELASNGPAVP…MAAFDQHANY (325 aa)). Glycyl lysine isopeptide (Lys-Gly) (interchain with G-Cter in SUMO2) cross-links involve residues K74, K77, K84, and K89. The residue at position 99 (S99) is a Phosphoserine. Residues 104–143 (CPICLDRFDNVSYLDRCLHKFCFRCVQEWSKNKAECPLCK) form an RING-type zinc finger. K160 participates in a covalent cross-link: Glycyl lysine isopeptide (Lys-Gly) (interchain with G-Cter in SUMO2). Phosphoserine is present on S196. K251 participates in a covalent cross-link: Glycyl lysine isopeptide (Lys-Gly) (interchain with G-Cter in SUMO2). Disordered stretches follow at residues 414-477 (QAPW…SSSD) and 496-692 (VELS…RYYL). Positions 434-444 (VGVSSLLNSSD) are enriched in low complexity. Residues 438 to 574 (SLLNSSDSSD…RSTSLPAPRD (137 aa)) are sumoylation and localization to discrete nuclear foci. The interaction with SUMO1 stretch occupies residues 438-654 (SLLNSSDSSD…RSRTRDSSWS (217 aa)). Positions 455 to 464 (TTSQIQGVQT) are enriched in polar residues. The segment at 457–731 (SQIQGVQTND…RRTLSRAHYS (275 aa)) is interaction with p53/TP53. The segment at 457 to 879 (SQIQGVQTND…GKATDTSKHH (423 aa)) is interaction with TOP1. The segment covering 465-477 (NDDVNNDSDSSSD) has biased composition (low complexity). S500 carries the phosphoserine modification. Basic and acidic residues predominate over residues 507–518 (PYEKVETVKTQE). Over residues 522–535 (SYSSGDSDVSRASS) the composition is skewed to low complexity. The span at 540 to 566 (LGKDEQMSKSHCDSDTRISSKKEEKRS) shows a compositional bias: basic and acidic residues. K561 is covalently cross-linked (Glycyl lysine isopeptide (Lys-Gly) (interchain with G-Cter in SUMO)). Phosphoserine is present on S585. Basic residues-rich tracts occupy residues 613–629 (RNHR…KRSR) and 637–647 (PRARKDKKRSR). Over residues 654–669 (SRRSQTLSLSSGSTSR) the composition is skewed to low complexity. Residue K701 forms a Glycyl lysine isopeptide (Lys-Gly) (interchain with G-Cter in SUMO2) linkage. Disordered stretches follow at residues 713–934 (RDGY…PIQD) and 970–1033 (TVEN…CDVS). S718 carries the phosphoserine; by PLK1 modification. The span at 721–730 (RRRTLSRAHY) shows a compositional bias: basic residues. Over residues 731-747 (SRQSSSPEFRIQSFSER) the composition is skewed to polar residues. S734 is modified (phosphoserine). Positions 770–780 (SVSSNRSRTTS) are enriched in low complexity. Over residues 815-837 (FTSKGKDSHYQKSKLDGSYKNES) the composition is skewed to basic and acidic residues. Residues K818 and K834 each participate in a glycyl lysine isopeptide (Lys-Gly) (interchain with G-Cter in SUMO2) cross-link. Over residues 851 to 860 (KHKRRRRRTR) the composition is skewed to basic residues. Positions 851 to 914 (KHKRRRRRTR…ITIDSDSDGE (64 aa)) are interaction with UBE2I. S861 and S863 each carry phosphoserine. A compositionally biased stretch (basic residues) spans 877-894 (KHHKKKKKKHKKKHKKHH). Residues S909, S911, S999, S1016, and S1025 each carry the phosphoserine modification. The segment covering 992-1008 (TFASDLESQSSNVSIQA) has biased composition (polar residues).

Interacts with TOP1. Interacts with the SUMO1 conjugating enzyme UBE2I. Interacts with SUMO1. Interacts with NKX3-1; polyubiquitinates NKX3-1 and induces its proteasomal degradation. Interacts with SIN3A; sumoylates SIN3A. Interacts with IKBKE; induced by DNA damage. Interacts with p53/TP53. Interacts with PARK7/DJ-1. In terms of processing, phosphorylation at Ser-99 regulates the E3 ubiquitin-protein ligase activity but not the SUMO1-protein ligase activity. Phosphorylation at Ser-718 increases the E3 ubiquitin-protein ligase activity versus the E3 SUMO1-protein ligase activity resulting in increased p53/TP53 ubiquitination and degradation. Sumoylated.

The protein localises to the nucleus. It localises to the PML body. The catalysed reaction is S-ubiquitinyl-[E2 ubiquitin-conjugating enzyme]-L-cysteine + [acceptor protein]-L-lysine = [E2 ubiquitin-conjugating enzyme]-L-cysteine + N(6)-ubiquitinyl-[acceptor protein]-L-lysine.. Functions as an E3 ubiquitin-protein ligase and as a E3 SUMO1-protein ligase. Probable tumor suppressor involved in cell growth, cell proliferation and apoptosis that regulates p53/TP53 stability through ubiquitin-dependent degradation. May regulate chromatin modification through sumoylation of several chromatin modification-associated proteins. May be involved in DNA-damage-induced cell death through IKBKE sumoylation. The polypeptide is E3 ubiquitin-protein ligase Topors (Topors) (Mus musculus (Mouse)).